We begin with the raw amino-acid sequence, 474 residues long: tRNA-2-methylthio-N(6)-dimethylallyladenosine synthase (474 aa).

Residues 3 to 120 enclose the MTTase N-terminal domain; sequence KKLHIKTWGC…LPDMIEQVRR (118 aa). Residues Cys12, Cys49, Cys83, Cys157, Cys161, and Cys164 each coordinate [4Fe-4S] cluster. Residues 143-375 enclose the Radical SAM core domain; it reads RAEGPTAFVS…QDRITQQAMR (233 aa). Positions 378–441 constitute a TRAM domain; the sequence is RHMMGTVQRI…TNSLRGKFIR (64 aa).

This sequence belongs to the methylthiotransferase family. MiaB subfamily. Monomer. Requires [4Fe-4S] cluster as cofactor.

It is found in the cytoplasm. It catalyses the reaction N(6)-dimethylallyladenosine(37) in tRNA + (sulfur carrier)-SH + AH2 + 2 S-adenosyl-L-methionine = 2-methylsulfanyl-N(6)-dimethylallyladenosine(37) in tRNA + (sulfur carrier)-H + 5'-deoxyadenosine + L-methionine + A + S-adenosyl-L-homocysteine + 2 H(+). Functionally, catalyzes the methylthiolation of N6-(dimethylallyl)adenosine (i(6)A), leading to the formation of 2-methylthio-N6-(dimethylallyl)adenosine (ms(2)i(6)A) at position 37 in tRNAs that read codons beginning with uridine. This chain is tRNA-2-methylthio-N(6)-dimethylallyladenosine synthase, found in Shewanella sp. (strain MR-4).